The following is a 374-amino-acid chain: Putative 2,3-diketo-5-methylthiopentyl-1-phosphate enolase (374 aa).

Substrate-binding positions include lysine 138, 164–167 (QDDE), histidine 255, glycine 327, and 349–350 (GG). Aspartate 166 is a binding site for Mg(2+).

This sequence belongs to the RuBisCO large chain family. Type IV subfamily. As to quaternary structure, homodimer. The cofactor is Mg(2+).

The enzyme catalyses 5-methylsulfanyl-2,3-dioxopentyl phosphate = 2-hydroxy-5-methylsulfanyl-3-oxopent-1-enyl phosphate. Its pathway is amino-acid biosynthesis; L-methionine biosynthesis via salvage pathway; L-methionine from S-methyl-5-thio-alpha-D-ribose 1-phosphate: step 3/6. In terms of biological role, catalyzes the enolization of 2,3-diketo-5-methylthiopentyl-1-phosphate (DK-MTP-1-P) into 2-hydroxy-3-keto-5-methylthiopentenyl-1-phosphate (HK-MTPenyl-1-P). The sequence is that of Putative 2,3-diketo-5-methylthiopentyl-1-phosphate enolase (mtnW) from Shouchella clausii (strain KSM-K16) (Alkalihalobacillus clausii).